A 220-amino-acid polypeptide reads, in one-letter code: Large ribosomal subunit protein uL1 (220 aa).

This sequence belongs to the universal ribosomal protein uL1 family. As to quaternary structure, part of the 50S ribosomal subunit.

Functionally, binds directly to 23S rRNA. The L1 stalk is quite mobile in the ribosome, and is involved in E site tRNA release. Its function is as follows. Protein L1 is also a translational repressor protein, it controls the translation of the L11 operon by binding to its mRNA. The polypeptide is Large ribosomal subunit protein uL1 (Ehrlichia ruminantium (strain Gardel)).